The primary structure comprises 479 residues: Probable xyloglucan galactosyltransferase GT15 (479 aa).

Over 1–20 (MKNNNSSSVSIENHPWKKKP) the chain is Cytoplasmic. Residues 21–40 (TTLLLFLSLLSISLLLLRLS) form a helical; Signal-anchor for type II membrane protein membrane-spanning segment. Residues 41–479 (QDKIILITTT…GIRRNEFKTD (439 aa)) lie on the Lumenal side of the membrane. N-linked (GlcNAc...) asparagine glycosylation is found at Asn155, Asn242, Asn285, and Asn391.

It belongs to the glycosyltransferase 47 family. As to expression, expressed in roots, hypocotyls, cotyledons, leaves, stems and sepals.

The protein localises to the golgi apparatus membrane. Functionally, functions in xyloglucan synthesis by adding side chains to the xylosylated glucan backbone. Involved in the galactosylation of hemicellulose xyloglucan. The protein is Probable xyloglucan galactosyltransferase GT15 of Arabidopsis thaliana (Mouse-ear cress).